A 557-amino-acid polypeptide reads, in one-letter code: Probable serine/threonine-protein kinase WNK7 (557 aa).

Residues 28–285 (IRYKEVIGKG…AEELLLDSFL (258 aa)) enclose the Protein kinase domain. ATP is bound by residues 108-111 (TELF) and lysine 158. The active-site Proton acceptor is the aspartate 175. Residues 451–477 (QNQSSKDNHQNGASSQAGESISHSLSS) are compositionally biased toward polar residues. Residues 451 to 517 (QNQSSKDNHQ…EEEEDERLKE (67 aa)) form a disordered region. At serine 505 the chain carries Phosphoserine.

It belongs to the protein kinase superfamily. Ser/Thr protein kinase family. WNK subfamily.

It catalyses the reaction L-seryl-[protein] + ATP = O-phospho-L-seryl-[protein] + ADP + H(+). The enzyme catalyses L-threonyl-[protein] + ATP = O-phospho-L-threonyl-[protein] + ADP + H(+). Functionally, may regulate flowering time by modulating the photoperiod pathway. This is Probable serine/threonine-protein kinase WNK7 (WNK7) from Arabidopsis thaliana (Mouse-ear cress).